An 803-amino-acid chain; its full sequence is Myb-like protein V (803 aa).

Disordered regions lie at residues 237–333 (SNIY…LPGL) and 429–803 (KSTS…SRRK). A coiled-coil region spans residues 258 to 323 (DANDKNENNN…ENNKNKRTKS (66 aa)). Positions 271–294 (DDADDAAADDADDADDDDMDDESD) are enriched in acidic residues. The segment covering 295–315 (SNNNNKNSNNKNSNNKNSNEN) has biased composition (low complexity). Residues 332 to 379 (GLWTDEECRSLIKAVMIIGHRWIKIKEDYYSTSKRKPSQLKDKMRSLR) enclose the Myb-like domain. 2 coiled-coil regions span residues 400–429 (EIEK…SNIK) and 463–496 (NNED…NSAV). The span at 429-438 (KSTSNTSAAS) shows a compositional bias: polar residues. Composition is skewed to acidic residues over residues 448 to 480 (NDSD…DEND) and 510 to 533 (EEEE…EENE). 2 stretches are compositionally biased toward basic residues: residues 537-553 (KQKR…KKLK) and 568-577 (HKSKLKSKPQ). Residues 573–616 (KSKPQRKVEKEESEKEESEEEESEEEEEEDDEDYESEEDKKKKK) adopt a coiled-coil conformation. The span at 586–609 (EKEESEEEESEEEEEEDDEDYESE) shows a compositional bias: acidic residues. Low complexity-rich tracts occupy residues 625–636 (TSTHTTTTTTTT) and 666–733 (KKSN…PTKK). A compositionally biased stretch (basic and acidic residues) spans 786-795 (LNKDSKENKK).

The protein is Myb-like protein V (mybV) of Dictyostelium discoideum (Social amoeba).